The primary structure comprises 489 residues: uncharacterized protein (489 aa).

Disordered regions lie at residues M1 to D94, N109 to D229, D300 to Q389, and S428 to K461. Low complexity-rich tracts occupy residues L43–K53 and S64–D77. The span at N121 to D138 shows a compositional bias: acidic residues. Over residues K144–L154 the composition is skewed to basic residues. The segment covering M155–N164 has biased composition (basic and acidic residues). The segment covering S173–P199 has biased composition (basic residues). Acidic residues predominate over residues N308–E343. Low complexity-rich tracts occupy residues D344–Q389 and S433–S449.

This is an uncharacterized protein from Dictyostelium discoideum (Social amoeba).